The sequence spans 501 residues: Myrosinase MA1 (501 aa).

3 cysteine pairs are disulfide-bonded: cysteine 6–cysteine 438, cysteine 14–cysteine 434, and cysteine 206–cysteine 214. A glycan (N-linked (GlcNAc...) asparagine) is linked at asparagine 21. Position 39 (glutamine 39) interacts with substrate. Histidine 56 provides a ligand contact to Zn(2+). A glycan (N-linked (GlcNAc...) asparagine) is linked at asparagine 60. Aspartate 70 contacts Zn(2+). N-linked (GlcNAc...) asparagine glycosylation occurs at asparagine 90. Residues histidine 141 and asparagine 186 each contribute to the substrate site. Glutamine 187 serves as a coordination point for L-ascorbate. 2 N-linked (GlcNAc...) asparagine glycosylation sites follow: asparagine 218 and asparagine 244. Arginine 259 is a binding site for L-ascorbate. N-linked (GlcNAc...) asparagine glycosylation is found at asparagine 265 and asparagine 292. Tyrosine 330 is a binding site for substrate. N-linked (GlcNAc...) asparagine glycans are attached at residues asparagine 343, asparagine 346, and asparagine 361. Glutamate 409 (nucleophile) is an active-site residue. Substrate contacts are provided by residues tryptophan 457 and 464–465 (EF). The N-linked (GlcNAc...) asparagine glycan is linked to asparagine 482.

The protein belongs to the glycosyl hydrolase 1 family. In terms of assembly, homodimer. In vacuoles called myrosin grains of a certain class of cells, myrosin cells, distributed in the cotyledons and the axis of the embryo as well as in different organs of the growing plant.

The protein localises to the vacuole. The catalysed reaction is a thioglucoside + H2O = a sugar + a thiol.. Functionally, degradation of glucosinolates (glucose residue linked by a thioglucoside bound to an amino acid derivative) to glucose, sulfate and any of the products: thiocyanates, isothiocyanates, nitriles, epithionitriles or oxazolidine-2-thiones. This is Myrosinase MA1 from Sinapis alba (White mustard).